Reading from the N-terminus, the 97-residue chain is Ribosomal biogenesis factor (97 aa).

Ser-19 is subject to Phosphoserine. Lys-21 is subject to N6-acetyllysine. Ser-69 carries the post-translational modification Phosphoserine.

Associates with the pre-60S ribosomal particles.

It is found in the nucleus. The protein resides in the nucleolus. Trans-acting factor in ribosome biogenesis required for efficient 40S and 60S subunit production. This is Ribosomal biogenesis factor (Rbis) from Mus musculus (Mouse).